We begin with the raw amino-acid sequence, 602 residues long: Adenylosuccinate synthetase (602 aa).

Residues Gly-74–Lys-80 and Gly-104–Thr-106 each bind GTP. The Proton acceptor role is filled by Asp-75. Residues Asp-75 and Gly-104 each coordinate Mg(2+). IMP contacts are provided by residues Asp-75–Lys-78, Asn-102–His-105, Thr-189, Lys-203, Gln-315, Thr-331, and Lys-459. Catalysis depends on His-105, which acts as the Proton donor. Position 455 to 461 (Ala-455 to Arg-461) interacts with substrate. Residues Arg-461 and Gly-589–Gly-591 contribute to the GTP site.

The protein belongs to the adenylosuccinate synthetase family. In terms of assembly, homodimer. Mg(2+) serves as cofactor.

The protein localises to the cytoplasm. The enzyme catalyses IMP + L-aspartate + GTP = N(6)-(1,2-dicarboxyethyl)-AMP + GDP + phosphate + 2 H(+). Its pathway is purine metabolism; AMP biosynthesis via de novo pathway; AMP from IMP: step 1/2. Its function is as follows. Plays an important role in the salvage pathway for purine nucleotide biosynthesis. Catalyzes the first committed step in the biosynthesis of AMP from IMP. The chain is Adenylosuccinate synthetase from Trypanosoma brucei gambiense (strain MHOM/CI/86/DAL972).